The chain runs to 239 residues: Ribose-5-phosphate isomerase A (239 aa).

Residues 31–34 (FGST), 88–91 (DGAD), and 101–104 (KGGG) each bind substrate. Glu110 serves as the catalytic Proton acceptor. Lys128 is a binding site for substrate.

It belongs to the ribose 5-phosphate isomerase family. As to quaternary structure, homodimer.

It carries out the reaction aldehydo-D-ribose 5-phosphate = D-ribulose 5-phosphate. The protein operates within carbohydrate degradation; pentose phosphate pathway; D-ribose 5-phosphate from D-ribulose 5-phosphate (non-oxidative stage): step 1/1. Its function is as follows. Catalyzes the reversible conversion of ribose-5-phosphate to ribulose 5-phosphate. In Chloroflexus aurantiacus (strain ATCC 29366 / DSM 635 / J-10-fl), this protein is Ribose-5-phosphate isomerase A.